Consider the following 406-residue polypeptide: Tryptophan synthase beta chain (406 aa).

K99 is subject to N6-(pyridoxal phosphate)lysine.

It belongs to the TrpB family. Tetramer of two alpha and two beta chains. Pyridoxal 5'-phosphate serves as cofactor.

The enzyme catalyses (1S,2R)-1-C-(indol-3-yl)glycerol 3-phosphate + L-serine = D-glyceraldehyde 3-phosphate + L-tryptophan + H2O. Its pathway is amino-acid biosynthesis; L-tryptophan biosynthesis; L-tryptophan from chorismate: step 5/5. Functionally, the beta subunit is responsible for the synthesis of L-tryptophan from indole and L-serine. The sequence is that of Tryptophan synthase beta chain (trpB) from Agrobacterium fabrum (strain C58 / ATCC 33970) (Agrobacterium tumefaciens (strain C58)).